Reading from the N-terminus, the 332-residue chain is L-lactate dehydrogenase A chain (332 aa).

Alanine 2 carries the N-acetylalanine modification. Lysine 5 carries the N6-acetyllysine; alternate modification. N6-succinyllysine; alternate is present on lysine 5. N6-acetyllysine is present on lysine 14. 29–57 (GAVGMACAISILMKDLADEVALVDVMEDK) serves as a coordination point for NAD(+). Residue lysine 57 is modified to N6-acetyllysine; alternate. A Glycyl lysine isopeptide (Lys-Gly) (interchain with G-Cter in SUMO2); alternate cross-link involves residue lysine 57. N6-acetyllysine is present on lysine 81. Residue arginine 106 coordinates substrate. Position 118 is an N6-acetyllysine; alternate (lysine 118). Lysine 118 carries the post-translational modification N6-succinyllysine; alternate. Lysine 126 carries the post-translational modification N6-acetyllysine. Asparagine 138 is a binding site for NAD(+). Substrate is bound by residues asparagine 138 and arginine 169. Catalysis depends on histidine 193, which acts as the Proton acceptor. An N6-acetyllysine mark is found at lysine 224 and lysine 232. Tyrosine 239 is subject to Phosphotyrosine. Lysine 243 is modified (N6-acetyllysine). Threonine 248 contributes to the substrate binding site. The residue at position 309 (threonine 309) is a Phosphothreonine. Position 318 is an N6-acetyllysine; alternate (lysine 318). Lysine 318 carries the N6-succinyllysine; alternate modification. Threonine 322 carries the phosphothreonine modification.

This sequence belongs to the LDH/MDH superfamily. LDH family. As to quaternary structure, homotetramer. Interacts with PTEN upstream reading frame protein MP31. In terms of processing, ISGylated.

The protein localises to the cytoplasm. The enzyme catalyses (S)-lactate + NAD(+) = pyruvate + NADH + H(+). It functions in the pathway fermentation; pyruvate fermentation to lactate; (S)-lactate from pyruvate: step 1/1. Functionally, interconverts simultaneously and stereospecifically pyruvate and lactate with concomitant interconversion of NADH and NAD(+). The sequence is that of L-lactate dehydrogenase A chain (LDHA) from Bos mutus grunniens (Wild yak).